A 141-amino-acid polypeptide reads, in one-letter code: HTH-type transcriptional regulator MntR (141 aa).

The HTH dtxR-type domain occupies 1-63 (MPTPSMEDYI…YEKYRGLVLT (63 aa)). 6 residues coordinate Mn(2+): Asp8, Glu11, His77, Glu99, Glu102, and His103.

This sequence belongs to the DtxR/MntR family. Homodimer.

It is found in the cytoplasm. DNA binding is strongly activated by Mn(2+). Its function is as follows. Central regulator of manganese homeostasis. The protein is HTH-type transcriptional regulator MntR of Geobacillus thermodenitrificans (strain NG80-2).